The sequence spans 391 residues: uncharacterized protein (391 aa).

WD repeat units lie at residues 137-179 and 182-222; these read VNDI…PILA and PLSS…SAEE.

Its subcellular location is the cytoplasm. It localises to the nucleus. This is an uncharacterized protein from Schizosaccharomyces pombe (strain 972 / ATCC 24843) (Fission yeast).